The following is a 94-amino-acid chain: Large ribosomal subunit protein bL27 (94 aa).

Residues 1-9 (MLKLNLQFF) constitute a propeptide that is removed on maturation. The tract at residues 13–32 (KGLGSTKNGRDSESKRLGAK) is disordered. A compositionally biased stretch (basic and acidic residues) spans 20–32 (NGRDSESKRLGAK).

This sequence belongs to the bacterial ribosomal protein bL27 family. The N-terminus is cleaved by ribosomal processing cysteine protease Prp.

The sequence is that of Large ribosomal subunit protein bL27 from Staphylococcus saprophyticus subsp. saprophyticus (strain ATCC 15305 / DSM 20229 / NCIMB 8711 / NCTC 7292 / S-41).